Consider the following 178-residue polypeptide: Histone H3-like centromeric protein CENH3 (178 aa).

The disordered stretch occupies residues 1-81 (MARTKHRVTR…GSQKKSYRYR (81 aa)). Lys5 carries the post-translational modification N6,N6,N6-trimethyllysine; alternate. Lys5 is modified (N6,N6-dimethyllysine; alternate). Lys5 is modified (N6-methyllysine; alternate). A Phosphoserine modification is found at Ser11. A compositionally biased stretch (low complexity) spans 16-36 (QTDAAGASSSQAAGPTTTPTR). The segment covering 43–56 (DNTQQTNPTTSPAT) has biased composition (polar residues). An N6-methyllysine; alternate mark is found at Lys63 and Lys75. Lys63 bears the N6-acetyllysine; alternate mark. An N6,N6,N6-trimethyllysine; alternate modification is found at Lys75. Lys75 is modified (N6,N6-dimethyllysine; alternate).

The protein belongs to the histone H3 family. As to quaternary structure, forms a nucleosome-like histone octamer containing two molecules each of H2A, H2B, CENH3 and H4 assembled in one CENH3-H4 heterotetramer and two H2A-H2B heterodimers. Interacts with ORTH2.

Its subcellular location is the chromosome. The protein localises to the centromere. It localises to the kinetochore. Functionally, histone H3-like variant which exclusively replaces conventional H3 in the nucleosome core of centromeric chromatin at the inner plate of the kinetochore. Required for recruitment and assembly of kinetochore proteins, mitotic progression and chromosome segregation. May serve as an epigenetic mark that propagates centromere identity through replication and cell division. The protein is Histone H3-like centromeric protein CENH3 of Arabidopsis thaliana (Mouse-ear cress).